Consider the following 273-residue polypeptide: Transmembrane protein 202 (273 aa).

Transmembrane regions (helical) follow at residues 53–75, 121–141, 155–175, and 189–209; these read HIYI…IAMS, FFLI…SSWI, VSML…LFVA, and LLWT…AGII. The tract at residues 242–273 is disordered; that stretch reads TTVSPAKDEGPRSEMESLSVREKNLPKSGLWW. The segment covering 247–266 has biased composition (basic and acidic residues); that stretch reads AKDEGPRSEMESLSVREKNL.

It localises to the membrane. This is Transmembrane protein 202 (TMEM202) from Homo sapiens (Human).